Consider the following 341-residue polypeptide: MTDAPTLTTDVAIIGAGPAGLFAAFECGMLKLDSLLIDALDCVGGQCAALYPEKPIYDIPGHPAIAGAALIEGLEQQIAPFDVPRLLGRRVERLSGHRGAFTLGTDRGETIHARAVIIAAGAGAFGPNRPPLAGLDGFEATGAVQYYVRRRADFAGTRIVIAGGGDSAIDWALALKDEAEKIWLVHRRDRFRAAPESLRQLDEAVAAGRIEKIVPYQLHGLRGTDGALEGVEVATLDGDTRILPADRLLPFFGLSTDLGPIAHWGMDSIRSTIPVVPSSCETTLPGVFAVGDVAAYPGKLKLILQGFSEGAMAAHAIHPIVRPDTALHFEYSTSKGVPDRI.

Residues Asp-38, Gln-46, Tyr-51, Val-91, Phe-125, Asp-292, and Thr-333 each contribute to the FAD site.

This sequence belongs to the ferredoxin--NADP reductase type 2 family. Homodimer. FAD is required as a cofactor.

It catalyses the reaction 2 reduced [2Fe-2S]-[ferredoxin] + NADP(+) + H(+) = 2 oxidized [2Fe-2S]-[ferredoxin] + NADPH. The polypeptide is Ferredoxin--NADP reductase (Gluconacetobacter diazotrophicus (strain ATCC 49037 / DSM 5601 / CCUG 37298 / CIP 103539 / LMG 7603 / PAl5)).